The following is a 299-amino-acid chain: SET domain-containing protein 9 (299 aa).

Residues 122-295 (FSVAQATSSL…QGEELFSNYY (174 aa)) enclose the SET domain. Y294 is a binding site for S-adenosyl-L-methionine.

It belongs to the class V-like SAM-binding methyltransferase superfamily.

This is SET domain-containing protein 9 (SETD9) from Homo sapiens (Human).